The sequence spans 598 residues: Probable translation initiation factor IF-2 (598 aa).

A tr-type G domain is found at I8 to E226. The G1 stretch occupies residues G17 to T24. G17–T24 serves as a coordination point for GTP. Positions G42–H46 are G2. Positions D81–G84 are G3. Residues D81–H85 and N135–D138 each bind GTP. Residues N135–D138 are G4. The G5 stretch occupies residues S203 to V205.

This sequence belongs to the TRAFAC class translation factor GTPase superfamily. Classic translation factor GTPase family. IF-2 subfamily.

Function in general translation initiation by promoting the binding of the formylmethionine-tRNA to ribosomes. Seems to function along with eIF-2. The chain is Probable translation initiation factor IF-2 from Methanopyrus kandleri (strain AV19 / DSM 6324 / JCM 9639 / NBRC 100938).